The primary structure comprises 319 residues: tRNA-cytidine(32) 2-sulfurtransferase (319 aa).

A PP-loop motif motif is present at residues 43–48; that stretch reads SGGKDS. 3 residues coordinate [4Fe-4S] cluster: cysteine 118, cysteine 121, and cysteine 209.

This sequence belongs to the TtcA family. Homodimer. It depends on Mg(2+) as a cofactor. The cofactor is [4Fe-4S] cluster.

Its subcellular location is the cytoplasm. It carries out the reaction cytidine(32) in tRNA + S-sulfanyl-L-cysteinyl-[cysteine desulfurase] + AH2 + ATP = 2-thiocytidine(32) in tRNA + L-cysteinyl-[cysteine desulfurase] + A + AMP + diphosphate + H(+). It functions in the pathway tRNA modification. Functionally, catalyzes the ATP-dependent 2-thiolation of cytidine in position 32 of tRNA, to form 2-thiocytidine (s(2)C32). The sulfur atoms are provided by the cysteine/cysteine desulfurase (IscS) system. The chain is tRNA-cytidine(32) 2-sulfurtransferase from Neisseria meningitidis serogroup C / serotype 2a (strain ATCC 700532 / DSM 15464 / FAM18).